Here is a 108-residue protein sequence, read N- to C-terminus: X antigen family member 5 (108 aa).

Positions 20-108 (VGPMLEPSVP…PEGGEGKPQL (89 aa)) are disordered. Composition is skewed to basic and acidic residues over residues 40 to 52 (SQDH…REDD) and 94 to 108 (EQFK…KPQL).

Belongs to the GAGE family.

The chain is X antigen family member 5 (XAGE5) from Homo sapiens (Human).